The chain runs to 198 residues: MLRSFLLIVATVSLFGQCKPLPLATSPVSDAVRAPHRSTHETRFLRTNDEERGATMTLAGVLRDKAQTKQLLTSWLNSGKSVPSVSNKLGLKRMSLEQAIHHENWKALTTFQRMKSKKAKAYAKYGTGYQTEAKTKENLLQWVMRGDSPKEVSSTLGLLGLSRRKIIDHQNYEAFRTFLKYRKQWAEMQGNGFTKLTT.

The first 20 residues, 1–20, serve as a signal peptide directing secretion; it reads MLRSFLLIVATVSLFGQCKP. The short motif at 43–52 is the RxLR-dEER element; it reads RFLRTNDEER.

The protein belongs to the RxLR effector family. Interacts with host MAP3Kbeta2 in the nucleoplasm.

It is found in the secreted. It localises to the host nucleus. Its subcellular location is the host nucleolus. In terms of biological role, secreted effector that promotes P.infestans colonization of plant host. Specifically suppresses Avr4/Cf4- and AvrPto/Pto-triggered cell death. Targets the potato MAP3Kbeta2 kinase, a positive regulator of cell death associated with plant immunity, and perturbs signaling pathways triggered by MAP3Kbeta2. This Phytophthora infestans (strain T30-4) (Potato late blight agent) protein is Secreted RxLR effector protein PITG_22926.